The chain runs to 220 residues: CDP-diacylglycerol--inositol 3-phosphatidyltransferase (220 aa).

Residues 1–20 (MSSNSTPEKVTAEHVLWYIP) lie on the Cytoplasmic side of the membrane. The helical transmembrane segment at 21–41 (NKIGYVRVITAALSFFVMKNH) threads the bilayer. Residues 42–45 (PTAF) lie on the Lumenal side of the membrane. The chain crosses the membrane as a helical span at residues 46 to 66 (TWLYSTSCLLDALDGTMARKY). Residues Asp56 and Asp59 each coordinate Mg(2+). 3 residues coordinate a CDP-1,2-diacyl-sn-glycerol: Gly60, Arg64, and Ser70. The Cytoplasmic portion of the chain corresponds to 67 to 75 (NQVSSLGAV). A helical membrane pass occupies residues 76–96 (LDMVTDRSSTAGLMCFLCVQY). Positions 77 and 81 each coordinate Mg(2+). Asp81 serves as the catalytic Proton acceptor. At 97–98 (PQ) the chain is on the lumenal side. A helical membrane pass occupies residues 99-119 (WCVFFQLMLGLDITSHYMHMY). Residues 120–145 (ASLSAGKTSHKSVGEGESRLLHLYYT) are Cytoplasmic-facing. A helical transmembrane segment spans residues 146-166 (RRDVLFTICAFNELFYAGLYL). Topologically, residues 167-170 (QLFS) are lumenal. A helical transmembrane segment spans residues 171–191 (NSATFGKWTTIISFPGYVFKQ). Residues 192-220 (TANVVQLKRAALILADNDAKNANEKNKTY) lie on the Cytoplasmic side of the membrane.

Belongs to the CDP-alcohol phosphatidyltransferase class-I family. Requires Mn(2+) as cofactor. Mg(2+) is required as a cofactor.

The protein localises to the microsome membrane. It localises to the endoplasmic reticulum membrane. Its subcellular location is the golgi apparatus membrane. It is found in the mitochondrion outer membrane. It carries out the reaction a CDP-1,2-diacyl-sn-glycerol + myo-inositol = a 1,2-diacyl-sn-glycero-3-phospho-(1D-myo-inositol) + CMP + H(+). In terms of biological role, catalyzes the synthesis of phosphatidylinositol (PtdIns). The chain is CDP-diacylglycerol--inositol 3-phosphatidyltransferase from Saccharomyces cerevisiae (strain ATCC 204508 / S288c) (Baker's yeast).